The sequence spans 216 residues: Uracil phosphoribosyltransferase (216 aa).

K30–R34 contacts GTP. 5-phospho-alpha-D-ribose 1-diphosphate-binding positions include R80, R105, and D140–T148. Residues I203 and G208–A210 contribute to the uracil site. D209 contacts 5-phospho-alpha-D-ribose 1-diphosphate.

The protein belongs to the UPRTase family. Mg(2+) serves as cofactor.

It carries out the reaction UMP + diphosphate = 5-phospho-alpha-D-ribose 1-diphosphate + uracil. The protein operates within pyrimidine metabolism; UMP biosynthesis via salvage pathway; UMP from uracil: step 1/1. With respect to regulation, allosterically activated by GTP. Its function is as follows. Catalyzes the conversion of uracil and 5-phospho-alpha-D-ribose 1-diphosphate (PRPP) to UMP and diphosphate. The polypeptide is Uracil phosphoribosyltransferase (Saccharolobus islandicus (strain Y.N.15.51 / Yellowstone #2) (Sulfolobus islandicus)).